The following is a 276-amino-acid chain: Secretagogin (276 aa).

EF-hand domains are found at residues 12–47 (LDAACFWQIWQRFDKEEKGYIRETELDAFFDHLLAK), 58–93 (NVQKVKEQLMTSHNVSKEGRILMKELASMFLSEDEN), 105–140 (DNSVEFMQIWRKYDADSSGFISAAELCNFLRDLFLH), 149–184 (ELEEYTSTMMKIFDKNKDGRLDLNDLARILALQENF), 197–232 (ERKRDFEKIFAHYDVSKTGALEGPEVDGFVKDMMEL), and 240–276 (VDLDKFREILLRHCDVNKDGKIQKSELALCLGLKINP). Positions 25, 31, 36, 73, 75, 77, 82, 118, 120, 122, 129, 162, 164, 166, 168, 173, 210, 212, 214, 221, 254, 256, 258, 260, and 265 each coordinate Ca(2+).

It is found in the cytoplasm. The protein localises to the secreted. Its subcellular location is the cytoplasmic vesicle. The protein resides in the secretory vesicle membrane. The chain is Secretagogin (Scgn) from Mus musculus (Mouse).